The sequence spans 1010 residues: Retinoblastoma-related protein 1 (1010 aa).

Positions 1-23 are disordered; the sequence is MEGAAPPASSGSEVTGAGSGKVD. The domain A stretch occupies residues 419–619; sequence TPVSTAMTTA…EKGSSMYNSL (201 aa). The interval 419-861 is pocket; the sequence is TPVSTAMTTA…NEVFIPTVKP (443 aa). Positions 620–730 are spacer; that stretch reads IVARPTLSAE…PAAGGELCAE (111 aa). The disordered stretch occupies residues 657–679; it reads LPPLPFQKQEHSPDKDEVRSPKR. The span at 664-679 shows a compositional bias: basic and acidic residues; sequence KQEHSPDKDEVRSPKR. Residues 731-861 are domain B; sequence TGIGVFLSKI…NEVFIPTVKP (131 aa). The tract at residues 868–898 is disordered; the sequence is SGTSPNKKNEEKCAADGPYPESPRLSRFPNL.

Belongs to the retinoblastoma protein (RB) family.

Its subcellular location is the nucleus. Its function is as follows. Regulator of biological processes that recruits a histone deacetylase to control gene transcription. May play a role in the entry into mitosis, negatively regulating the cell proliferation. Formation of stable complexes with geminiviridae replication-associated proteins may create a cellular environment which favors viral DNA replication. This is Retinoblastoma-related protein 1 (RBR1) from Oryza sativa subsp. japonica (Rice).